The primary structure comprises 93 residues: Class I hydrophobin SSP1 (93 aa).

The first 26 residues, 1-26, serve as a signal peptide directing secretion; sequence MKYITAISMLATAALTAATPLNGVEA. 4 disulfides stabilise this stretch: cysteine 39/cysteine 71, cysteine 47/cysteine 65, cysteine 48/cysteine 56, and cysteine 72/cysteine 89.

Belongs to the fungal hydrophobin family. As to quaternary structure, self-assembles to form functional amyloid fibrils called rodlets. Self-assembly into fibrillar rodlets occurs spontaneously at hydrophobic:hydrophilic interfaces and the rodlets further associate laterally to form amphipathic monolayers.

The protein resides in the secreted. The protein localises to the cell wall. Functionally, aerial growth, conidiation, and dispersal of filamentous fungi in the environment rely upon a capability of their secreting small amphipathic proteins called hydrophobins (HPBs) with low sequence identity. Class I can self-assemble into an outermost layer of rodlet bundles on aerial cell surfaces, conferring cellular hydrophobicity that supports fungal growth, development and dispersal; whereas Class II form highly ordered films at water-air interfaces through intermolecular interactions but contribute nothing to the rodlet structure. SSP1 is a class I hydrophobin that acts as an effector in the ericoid mycorrhizal interaction with Vaccinium myrtillus. May enhance attachment of the fungus to the root surface and protect the fungal hypha from plant defense compounds. The sequence is that of Class I hydrophobin SSP1 from Oidiodendron maius (strain Zn).